The following is a 237-amino-acid chain: Probable transcriptional regulatory protein Mfl546 (237 aa).

Residues 1-20 (MGRAHEVRAASMAKTAAKKS) are disordered. Over residues 9-20 (AASMAKTAAKKS) the composition is skewed to low complexity.

The protein belongs to the TACO1 family.

It is found in the cytoplasm. The sequence is that of Probable transcriptional regulatory protein Mfl546 from Mesoplasma florum (strain ATCC 33453 / NBRC 100688 / NCTC 11704 / L1) (Acholeplasma florum).